A 258-amino-acid polypeptide reads, in one-letter code: Imidazole glycerol phosphate synthase subunit HisF (258 aa).

Catalysis depends on residues Asp11 and Asp130.

The protein belongs to the HisA/HisF family. In terms of assembly, heterodimer of HisH and HisF.

The protein localises to the cytoplasm. It carries out the reaction 5-[(5-phospho-1-deoxy-D-ribulos-1-ylimino)methylamino]-1-(5-phospho-beta-D-ribosyl)imidazole-4-carboxamide + L-glutamine = D-erythro-1-(imidazol-4-yl)glycerol 3-phosphate + 5-amino-1-(5-phospho-beta-D-ribosyl)imidazole-4-carboxamide + L-glutamate + H(+). The protein operates within amino-acid biosynthesis; L-histidine biosynthesis; L-histidine from 5-phospho-alpha-D-ribose 1-diphosphate: step 5/9. IGPS catalyzes the conversion of PRFAR and glutamine to IGP, AICAR and glutamate. The HisF subunit catalyzes the cyclization activity that produces IGP and AICAR from PRFAR using the ammonia provided by the HisH subunit. The chain is Imidazole glycerol phosphate synthase subunit HisF from Baumannia cicadellinicola subsp. Homalodisca coagulata.